The following is a 353-amino-acid chain: Photosystem II protein D1 (353 aa).

Threonine 2 carries the post-translational modification N-acetylthreonine. Threonine 2 is subject to Phosphothreonine. Helical transmembrane passes span 29–46 (YIGWFGVLMIPTLLTATS), 118–133 (HFLLGVACYMGREWEL), and 142–156 (WIAVAYSAPVAAATA). Position 118 (histidine 118) interacts with chlorophyll a. Tyrosine 126 contacts pheophytin a. Residues aspartate 170 and glutamate 189 each contribute to the [CaMn4O5] cluster site. The helical transmembrane segment at 197–218 (FHMLGVAGVFGGSLFSAMHGSL) threads the bilayer. Chlorophyll a is bound at residue histidine 198. A quinone contacts are provided by residues histidine 215 and 264–265 (SF). Histidine 215 contacts Fe cation. Residue histidine 272 participates in Fe cation binding. The helical transmembrane segment at 274–288 (FLAAWPVVGIWFTAL) threads the bilayer. Positions 332, 333, 342, and 344 each coordinate [CaMn4O5] cluster. A propeptide spanning residues 345-353 (AVEAPSING) is cleaved from the precursor.

Belongs to the reaction center PufL/M/PsbA/D family. In terms of assembly, PSII is composed of 1 copy each of membrane proteins PsbA, PsbB, PsbC, PsbD, PsbE, PsbF, PsbH, PsbI, PsbJ, PsbK, PsbL, PsbM, PsbT, PsbX, PsbY, PsbZ, Psb30/Ycf12, at least 3 peripheral proteins of the oxygen-evolving complex and a large number of cofactors. It forms dimeric complexes. Requires The D1/D2 heterodimer binds P680, chlorophylls that are the primary electron donor of PSII, and subsequent electron acceptors. It shares a non-heme iron and each subunit binds pheophytin, quinone, additional chlorophylls, carotenoids and lipids. D1 provides most of the ligands for the Mn4-Ca-O5 cluster of the oxygen-evolving complex (OEC). There is also a Cl(-1) ion associated with D1 and D2, which is required for oxygen evolution. The PSII complex binds additional chlorophylls, carotenoids and specific lipids. as cofactor. In terms of processing, tyr-161 forms a radical intermediate that is referred to as redox-active TyrZ, YZ or Y-Z. Post-translationally, C-terminally processed by CTPA; processing is essential to allow assembly of the oxygen-evolving complex and thus photosynthetic growth.

The protein localises to the plastid. The protein resides in the chloroplast thylakoid membrane. The catalysed reaction is 2 a plastoquinone + 4 hnu + 2 H2O = 2 a plastoquinol + O2. Photosystem II (PSII) is a light-driven water:plastoquinone oxidoreductase that uses light energy to abstract electrons from H(2)O, generating O(2) and a proton gradient subsequently used for ATP formation. It consists of a core antenna complex that captures photons, and an electron transfer chain that converts photonic excitation into a charge separation. The D1/D2 (PsbA/PsbD) reaction center heterodimer binds P680, the primary electron donor of PSII as well as several subsequent electron acceptors. This chain is Photosystem II protein D1, found in Illicium oligandrum (Star anise).